A 235-amino-acid polypeptide reads, in one-letter code: 2-C-methyl-D-erythritol 4-phosphate cytidylyltransferase (235 aa).

The protein belongs to the IspD/TarI cytidylyltransferase family. IspD subfamily.

It carries out the reaction 2-C-methyl-D-erythritol 4-phosphate + CTP + H(+) = 4-CDP-2-C-methyl-D-erythritol + diphosphate. The protein operates within isoprenoid biosynthesis; isopentenyl diphosphate biosynthesis via DXP pathway; isopentenyl diphosphate from 1-deoxy-D-xylulose 5-phosphate: step 2/6. Functionally, catalyzes the formation of 4-diphosphocytidyl-2-C-methyl-D-erythritol from CTP and 2-C-methyl-D-erythritol 4-phosphate (MEP). The chain is 2-C-methyl-D-erythritol 4-phosphate cytidylyltransferase from Pseudomonas fluorescens (strain Pf0-1).